The following is a 369-amino-acid chain: Prenyltransferase malB (369 aa).

Residue Glu87 coordinates substrate. Dimethylallyl diphosphate contacts are provided by Arg100 and Tyr189. Tyr191 contributes to the substrate binding site.

It belongs to the tryptophan dimethylallyltransferase family.

In terms of biological role, prenyltransferase; part of the gene cluster that mediates the biosynthesis of malbrancheamide, a dichlorinated fungal indole alkaloid that belongs to a family of natural products containing a characteristic bicyclo[2.2.2]diazaoctane core. The first step of malbrancheamide biosynthesis involves coupling of L-proline and L-tryptophan by malG, a bimodular NRPS, to produce L-Pro-L-Trp aldehyde through reductive offloading. This compound undergoes spontaneous cyclization and dehydration to give a dienamine which is reverse prenylated at C-2 by malE. The other prenyltransferase present in the cluster, malB, displays modest activity, suggesting that may be a redundant gene in the pathway. Subsequently, a [4+2] Diels-Alder cyclo-addition catalyzed by the bifunctional enzyme malC forms the characteristic bicyclo[2.2.2]diazaoctane ring of premalbrancheamid. Finally, the flavin-dependent halogenase malA catalyzes the iterative dichlorination of the indole ring of premalbrancheamide to yield C-9 monochlorinated malbrancheamide B, C-8 monochlorinated isomalbrancheamide B, and dichlorinated malbrancheamide. MalA is also able to brominate premalbrancheamide at C-9 to yield malbrancheamide C, and, to a lesser extend, at C-8 to yield isomalbrancheamide C. Finally, malA can brominate C-9 monochlorinated malbrancheamide B at C-8 to yield malbrancheamide D, or C-8 monochlorinated isomalbrancheamide B at C-9 to produce isomalbrancheamide D. The protein is Prenyltransferase malB of Malbranchea aurantiaca.